Consider the following 315-residue polypeptide: Probable serine acetyltransferase 4 (315 aa).

The segment at 287–315 is disordered; sequence AKPIIGKKAAPQRRPEELPGVTMEQRWSD.

The protein belongs to the transferase hexapeptide repeat family. Homomultimer.

It carries out the reaction L-serine + acetyl-CoA = O-acetyl-L-serine + CoA. It functions in the pathway amino-acid biosynthesis; L-cysteine biosynthesis; L-cysteine from L-serine: step 1/2. The protein is Probable serine acetyltransferase 4 (SAT4) of Oryza sativa subsp. japonica (Rice).